The following is a 294-amino-acid chain: Small ribosomal subunit protein uS2 (294 aa).

Residues 232–245 (RAAEQDKAADDKAQ) show a composition bias toward basic and acidic residues. The interval 232-294 (RAAEQDKAAD…GSEEDGEAAN (63 aa)) is disordered. The span at 246-265 (EQAAAEAAKPEPAAPAPAAE) shows a compositional bias: low complexity.

It belongs to the universal ribosomal protein uS2 family.

This is Small ribosomal subunit protein uS2 from Desulfatibacillum aliphaticivorans.